A 459-amino-acid polypeptide reads, in one-letter code: MVEKLWGGRFEASLDKQTEEFGASIKFEQRLAPFDLKGSLAHVKMLGETGIITAEEATTIANGLIKVEEKLMKGQIEFKIENEDIHMNMETYLHDEIGPLAGKLHTARSRNDQVATDMHLYLKSVLSDLLKALRTLRETIVNLSVNHVDTLMPGYTHLQHAQPISFAQHLMAYYQMFTRDFDRFEFNVKHTDMNPLGAAALAGTTFPIDRELTTNLLQFEKAYANSMDAVSDRDFILEFLSNSSLLMMHLSRLCEELLLWSSHEFNFVSLSDNYSTGSSIMPQKKNPDMAELIRGKSGRVYGNLMSLLTVMKGLPLTYNKDLQEDKEGMFDSADTILTSLSVMDGMLSTMTVNRVNMEKATEQDFSNATELADYLAAKGLPFREAHELVGQLVLTCIKKGIYLQEVSLKDYQALSQLIEEDVYEILQSRTAVSRRNSLGGTGFESIKKQIEQAKKELQK.

Belongs to the lyase 1 family. Argininosuccinate lyase subfamily.

Its subcellular location is the cytoplasm. The catalysed reaction is 2-(N(omega)-L-arginino)succinate = fumarate + L-arginine. Its pathway is amino-acid biosynthesis; L-arginine biosynthesis; L-arginine from L-ornithine and carbamoyl phosphate: step 3/3. The sequence is that of Argininosuccinate lyase from Lactococcus lactis subsp. cremoris (strain SK11).